The primary structure comprises 250 residues: Ubiquinone/menaquinone biosynthesis C-methyltransferase UbiE (250 aa).

S-adenosyl-L-methionine contacts are provided by residues S73, D94, and 122 to 123; that span reads NA.

Belongs to the class I-like SAM-binding methyltransferase superfamily. MenG/UbiE family.

It carries out the reaction a 2-demethylmenaquinol + S-adenosyl-L-methionine = a menaquinol + S-adenosyl-L-homocysteine + H(+). It catalyses the reaction a 2-methoxy-6-(all-trans-polyprenyl)benzene-1,4-diol + S-adenosyl-L-methionine = a 5-methoxy-2-methyl-3-(all-trans-polyprenyl)benzene-1,4-diol + S-adenosyl-L-homocysteine + H(+). Its pathway is quinol/quinone metabolism; menaquinone biosynthesis; menaquinol from 1,4-dihydroxy-2-naphthoate: step 2/2. It functions in the pathway cofactor biosynthesis; ubiquinone biosynthesis. Its function is as follows. Methyltransferase required for the conversion of demethylmenaquinol (DMKH2) to menaquinol (MKH2) and the conversion of 2-polyprenyl-6-methoxy-1,4-benzoquinol (DDMQH2) to 2-polyprenyl-3-methyl-6-methoxy-1,4-benzoquinol (DMQH2). The polypeptide is Ubiquinone/menaquinone biosynthesis C-methyltransferase UbiE (Legionella pneumophila (strain Corby)).